A 266-amino-acid polypeptide reads, in one-letter code: Zinc transporter ZupT (266 aa).

8 consecutive transmembrane segments (helical) span residues 8–28, 35–55, 70–90, 123–143, 152–172, 185–205, 209–229, and 246–266; these read LALT…ALMV, FLTF…FVEI, HAAG…IWLI, GIFT…AVFF, GVVI…AVAV, FSYS…GYAL, FLSP…MVYI, and IAIS…LMLA. Fe(2+)-binding residues include Asn134 and Glu137. Positions 137 and 162 each coordinate Zn(2+). Residues Asn163, Glu166, and Glu195 each coordinate Fe(2+). Residue Glu166 coordinates Zn(2+).

It belongs to the ZIP transporter (TC 2.A.5) family. ZupT subfamily.

The protein resides in the cell inner membrane. The catalysed reaction is Zn(2+)(in) = Zn(2+)(out). In terms of biological role, mediates zinc uptake. May also transport other divalent cations. This Chlorobium limicola (strain DSM 245 / NBRC 103803 / 6330) protein is Zinc transporter ZupT.